Here is a 354-residue protein sequence, read N- to C-terminus: Ferrochelatase (354 aa).

2 residues coordinate Fe cation: H204 and E306.

It belongs to the ferrochelatase family.

Its subcellular location is the cytoplasm. It carries out the reaction heme b + 2 H(+) = protoporphyrin IX + Fe(2+). The protein operates within porphyrin-containing compound metabolism; protoheme biosynthesis; protoheme from protoporphyrin-IX: step 1/1. Catalyzes the ferrous insertion into protoporphyrin IX. The polypeptide is Ferrochelatase (Coxiella burnetii (strain CbuG_Q212) (Coxiella burnetii (strain Q212))).